Consider the following 320-residue polypeptide: Cytochrome f (320 aa).

A signal peptide spans 1 to 32 (MKTKKSYDKVTRWVTPPILMLIIIHIITGACS). The heme site is built by Tyr36, Cys56, Cys59, and His60. A helical membrane pass occupies residues 286–306 (IQGLLGFLASVVLAQIFLVLK).

This sequence belongs to the cytochrome f family. As to quaternary structure, the 4 large subunits of the cytochrome b6-f complex are cytochrome b6, subunit IV (17 kDa polypeptide, petD), cytochrome f and the Rieske protein, while the 4 small subunits are PetG, PetL, PetM and PetN. The complex functions as a dimer. Heme serves as cofactor.

Its subcellular location is the plastid. It is found in the chloroplast thylakoid membrane. Functionally, component of the cytochrome b6-f complex, which mediates electron transfer between photosystem II (PSII) and photosystem I (PSI), cyclic electron flow around PSI, and state transitions. This chain is Cytochrome f, found in Gnetum parvifolium (Small-leaved jointfir).